Here is a 492-residue protein sequence, read N- to C-terminus: Glutamyl-tRNA(Gln) amidotransferase subunit A (492 aa).

Active-site charge relay system residues include Lys79 and Ser154. Ser178 functions as the Acyl-ester intermediate in the catalytic mechanism.

Belongs to the amidase family. GatA subfamily. Heterotrimer of A, B and C subunits.

The catalysed reaction is L-glutamyl-tRNA(Gln) + L-glutamine + ATP + H2O = L-glutaminyl-tRNA(Gln) + L-glutamate + ADP + phosphate + H(+). In terms of biological role, allows the formation of correctly charged Gln-tRNA(Gln) through the transamidation of misacylated Glu-tRNA(Gln) in organisms which lack glutaminyl-tRNA synthetase. The reaction takes place in the presence of glutamine and ATP through an activated gamma-phospho-Glu-tRNA(Gln). The sequence is that of Glutamyl-tRNA(Gln) amidotransferase subunit A from Acinetobacter baylyi (strain ATCC 33305 / BD413 / ADP1).